We begin with the raw amino-acid sequence, 533 residues long: Probable RNA-binding protein 46 (533 aa).

RRM domains follow at residues 61–139, 141–223, and 236–308; these read CEVF…VSLD, CRLF…WADP, and KVLY…LAKP. Positions 338–362 are disordered; sequence ESHSKSLGKPPTLPTRLNGQHSPSP.

As to quaternary structure, interacts with YTHDC2, MEIOC, MOV10, CNOT6L, DDX4, UPF1 and PABPC1. As to expression, expressed in the testis and ovary (at protein level). Expressed in spermatogonia and spermatocytes in testis (at protein level).

It is found in the cytoplasm. Functionally, essential for male and female fertility, playing a crucial role in regulating germ cell development by ensuring the proper progression of meiosis prophase I. Regulates mitotic-to-meiotic transition in spermatogenesis by forming a complex with MEIOC and YTHDC2 which recognizes and down-regulates mitotic transcripts for a successful meiotic entry. Required for normal synaptonemal complex formation during meiosis, binding meiotic cohesin subunit mRNAs containing GCCUAU/GUUCGA motifs in their 3'UTRs regions and positively regulating their translation. Required for spermatogonial differentiation in both developing and adult testis. In Mus musculus (Mouse), this protein is Probable RNA-binding protein 46.